The sequence spans 414 residues: Ribulose bisphosphate carboxylase large chain (414 aa).

Substrate contacts are provided by Asn102 and Thr152. Lys154 functions as the Proton acceptor in the catalytic mechanism. A substrate-binding site is contributed by Lys156. Positions 180, 182, and 183 each coordinate Mg(2+). Residue Lys180 is modified to N6-carboxylysine. The active-site Proton acceptor is His273. Substrate is bound by residues Arg274, His306, and Ser358.

This sequence belongs to the RuBisCO large chain family. Type I subfamily. In terms of assembly, heterohexadecamer of 8 large chains and 8 small chains; disulfide-linked. The disulfide link is formed within the large subunit homodimers. It depends on Mg(2+) as a cofactor. The disulfide bond which can form in the large chain dimeric partners within the hexadecamer appears to be associated with oxidative stress and protein turnover.

Its subcellular location is the plastid. The protein resides in the chloroplast. The catalysed reaction is 2 (2R)-3-phosphoglycerate + 2 H(+) = D-ribulose 1,5-bisphosphate + CO2 + H2O. The enzyme catalyses D-ribulose 1,5-bisphosphate + O2 = 2-phosphoglycolate + (2R)-3-phosphoglycerate + 2 H(+). Its function is as follows. RuBisCO catalyzes two reactions: the carboxylation of D-ribulose 1,5-bisphosphate, the primary event in carbon dioxide fixation, as well as the oxidative fragmentation of the pentose substrate in the photorespiration process. Both reactions occur simultaneously and in competition at the same active site. This chain is Ribulose bisphosphate carboxylase large chain (rbcL), found in Antrophyum reticulatum (Ox-tongue fern).